The primary structure comprises 163 residues: UPF0262 protein RPB_4349 (163 aa).

It belongs to the UPF0262 family.

The polypeptide is UPF0262 protein RPB_4349 (Rhodopseudomonas palustris (strain HaA2)).